Reading from the N-terminus, the 97-residue chain is uncharacterized protein (97 aa).

To B.licheniformis xpaL1 and to B.subtilis XhlA.

This is an uncharacterized protein from Bacillus licheniformis.